A 314-amino-acid polypeptide reads, in one-letter code: Ribosomal RNA small subunit methyltransferase H (314 aa).

S-adenosyl-L-methionine-binding positions include glycine 37–histidine 39, aspartate 57, phenylalanine 84, aspartate 105, and glutamine 112.

It belongs to the methyltransferase superfamily. RsmH family.

It localises to the cytoplasm. The enzyme catalyses cytidine(1402) in 16S rRNA + S-adenosyl-L-methionine = N(4)-methylcytidine(1402) in 16S rRNA + S-adenosyl-L-homocysteine + H(+). In terms of biological role, specifically methylates the N4 position of cytidine in position 1402 (C1402) of 16S rRNA. The polypeptide is Ribosomal RNA small subunit methyltransferase H (Fusobacterium nucleatum subsp. nucleatum (strain ATCC 25586 / DSM 15643 / BCRC 10681 / CIP 101130 / JCM 8532 / KCTC 2640 / LMG 13131 / VPI 4355)).